The chain runs to 164 residues: DVAIVFNVEHTLSAVFLVPANKKVDGIIAAYPDPVKIWMHFARTVCNDKGRPTAIKIDFSKSELTLMNSPEFHLVFGECDGVKIQGIKIKRFEIEKDLTCGPGHGMSIGSLGKGNSRSEVSFVHLDGAKFIDTQNGLRSAVKIEDVTFKNANGYYTNPLNPPCK.

The protein belongs to the glycosyl hydrolase 28 family.

It localises to the secreted. The protein localises to the cell wall. It catalyses the reaction (1,4-alpha-D-galacturonosyl)n+m + H2O = (1,4-alpha-D-galacturonosyl)n + (1,4-alpha-D-galacturonosyl)m.. The chain is Polygalacturonase from Cupressus sempervirens (Italian cypress).